A 168-amino-acid chain; its full sequence is Zinc finger A20 and AN1 domain-containing stress-associated protein 1 (168 aa).

The A20-type zinc finger occupies 13–47 (PSEPKLCVKGCGFFGSPSNMNLCSKCYRDIRATEE). Zn(2+)-binding residues include Cys-19, Cys-23, Cys-35, and Cys-38. Residues 49-105 (TASAKAAVEKSLNPNKPKTQPQQSQEITQGVLGSGSSSSSTRGGDSAAAPLDPPKST) are disordered. The segment covering 60–76 (LNPNKPKTQPQQSQEIT) has biased composition (polar residues). Low complexity predominate over residues 82-94 (SGSSSSSTRGGDS). The segment at 103–149 (KSTATRCLSCNKKVGVTGFKCRCGSTFCGTHRYPESHECQFDFKGVA) adopts an AN1-type zinc-finger fold. Zn(2+) contacts are provided by Cys-109, Cys-112, Cys-123, Cys-125, Cys-130, His-133, His-139, and Cys-141.

Its function is as follows. May be involved in environmental stress response. This Arabidopsis thaliana (Mouse-ear cress) protein is Zinc finger A20 and AN1 domain-containing stress-associated protein 1 (SAP1).